We begin with the raw amino-acid sequence, 129 residues long: MGCCGCSGGCGSGCGGCGSGCGGCGSSCCVPICCCKPVCCCVPACSCTSCGSCGGSKGCCGSCGGSKGGCGSCGGSKGGCGSCGCSQCSCCKPCYCSSGCGSSCCQSSCCKPCCSQASCCVPICCQCKI.

Repeat copies occupy residues Cys28–Pro31, Cys34–Pro37, Cys40–Pro43, Cys90–Pro93, Cys109–Pro112, and Cys119–Pro122. The 6 X 4 AA repeats of C-C-X-P stretch occupies residues Cys28–Pro112.

It belongs to the KRTAP type 5 family. Interacts with hair keratins. As to expression, expressed in hair root and not in skin. Expressed also in liver and skeletal muscle.

In terms of biological role, in the hair cortex, hair keratin intermediate filaments are embedded in an interfilamentous matrix, consisting of hair keratin-associated protein (KRTAP), which are essential for the formation of a rigid and resistant hair shaft through their extensive disulfide bond cross-linking with abundant cysteine residues of hair keratins. The matrix proteins include the high-sulfur and high-glycine-tyrosine keratins. The chain is Keratin-associated protein 5-6 (KRTAP5-6) from Homo sapiens (Human).